We begin with the raw amino-acid sequence, 245 residues long: uncharacterized protein (245 aa).

A signal peptide spans 1–27 (MKLKKRVSMFLVALTMCGGLFVTPAKA).

This is an uncharacterized protein from Bacillus subtilis (strain 168).